The primary structure comprises 98 residues: NADH-ubiquinone oxidoreductase chain 4L (98 aa).

Transmembrane regions (helical) follow at residues S29–L49 and I61–V81.

The protein belongs to the complex I subunit 4L family. Core subunit of respiratory chain NADH dehydrogenase (Complex I) which is composed of 45 different subunits.

Its subcellular location is the mitochondrion inner membrane. It carries out the reaction a ubiquinone + NADH + 5 H(+)(in) = a ubiquinol + NAD(+) + 4 H(+)(out). Core subunit of the mitochondrial membrane respiratory chain NADH dehydrogenase (Complex I) which catalyzes electron transfer from NADH through the respiratory chain, using ubiquinone as an electron acceptor. Part of the enzyme membrane arm which is embedded in the lipid bilayer and involved in proton translocation. This Cheirogaleus medius (Fat-tailed dwarf lemur) protein is NADH-ubiquinone oxidoreductase chain 4L (MT-ND4L).